The chain runs to 417 residues: FAD-dependent monooxygenase aptC (417 aa).

An N-terminal signal peptide occupies residues 1 to 18 (MTLPVLIIGAGLSGLTTA). FAD-binding residues include E32, A43, R117, D332, and G345.

The protein belongs to the paxM FAD-dependent monooxygenase family. The cofactor is FAD.

It carries out the reaction 3,6,8,9-tetrahydroxy-1-oxo-3-(2-oxopropyl)-1,2,3,4-tetrahydroanthracene-2-carboxyl-[ACP] + NADPH + O2 + H(+) = 2,3,6,8,9-pentahydroxy-1-oxo-3-(2-oxopropyl)-1,2,3,4-tetrahydroanthracene-2-carboxyl-[ACP] + NADP(+) + H2O. It functions in the pathway secondary metabolite biosynthesis. Functionally, FAD-dependent monooxygenase; part of the gene cluster that mediates the biosynthesis of asperthecin, an anthraquinone pigment. Polyketide synthase (PKS) aptA catalyzes the formation of the aromatic polyketide from acetyl coenzyme A and seven malonyl coenzyme A molecules. Polyketide is subsequently hydrolyzed by the action of the hydrolase aptB into endocrocin-9-anthrone. Endocrocin-9-anthrone is then oxidized into endocrocin by the monooxygenase aptC. Endocrocin is likely to decarboxylate spontaneously to form emodin which explains why there is no decarboxylase in the asperthecin biosynthesis cluster. Finally, aptC or another endogenous oxygenase catalyzes additional oxidation steps to form asperthecin. In Emericella nidulans (strain FGSC A4 / ATCC 38163 / CBS 112.46 / NRRL 194 / M139) (Aspergillus nidulans), this protein is FAD-dependent monooxygenase aptC.